The primary structure comprises 313 residues: Proline iminopeptidase (313 aa).

The AB hydrolase-1 domain occupies lysine 35–glutamate 298. The active-site Nucleophile is serine 110. Residue aspartate 266 is part of the active site. Residue histidine 294 is the Proton donor of the active site.

This sequence belongs to the peptidase S33 family.

Its subcellular location is the cytoplasm. The enzyme catalyses Release of N-terminal proline from a peptide.. Its function is as follows. Specifically catalyzes the removal of N-terminal proline residues from peptides. This is Proline iminopeptidase (pip) from Xylella fastidiosa (strain 9a5c).